The sequence spans 68 residues: Kasstasin (68 aa).

Positions 1 to 20 are cleaved as a signal peptide; it reads MMKKSMLLLFFLGMVSFSLA. The propeptide occupies 21 to 44; that stretch reads DDKREDEGEEKRADEGEEKRAAEE. The interval 22 to 41 is disordered; the sequence is DKREDEGEEKRADEGEEKRA. Residue K67 is modified to Lysine amide.

This sequence belongs to the frog skin active peptide (FSAP) family. Brevinin subfamily. Expressed by the skin dorsal glands.

It localises to the secreted. In terms of biological role, peptide with potent vasoconstrictor properties (EC50=25 pM). Has moderate antimicrobial activity against Gram-positive bacterium S.aureus (MIC=55 uM) and against Gram-negative bacterium E.coli (MIC=110 uM). Not active against fungus C.albicans. Has weak hemolytic activity against horse erythrocytes. In Phlyctimantis maculatus (Red-legged running frog), this protein is Kasstasin.